The primary structure comprises 230 residues: MAIGKRLKKAREGIDREKLYPIAEAIKLIKDRATSKFDETIEIAMNLGVDPRHADQMVRGVVTLPNGTGRTLRVGVFARGAKAEEAKAAGADVVGAEDLVETVQGGTIAFDRCIATPDMMPLVGRLGKVLGPRGMMPNPKIGTVTMDVAGAVKGAKGGSVEFRVEKAGIVQAGIGKASFSEEKLVENVKALADAVAKAKPAGAKGTYIQRIAVSSSMGPGVKVEPGTVLG.

It belongs to the universal ribosomal protein uL1 family. In terms of assembly, part of the 50S ribosomal subunit.

Binds directly to 23S rRNA. The L1 stalk is quite mobile in the ribosome, and is involved in E site tRNA release. In terms of biological role, protein L1 is also a translational repressor protein, it controls the translation of the L11 operon by binding to its mRNA. The chain is Large ribosomal subunit protein uL1 from Nitrobacter hamburgensis (strain DSM 10229 / NCIMB 13809 / X14).